Here is a 391-residue protein sequence, read N- to C-terminus: ATPase GET3C (391 aa).

Residues 1–50 (MAALLLLNRVSRSTSSISLHRVAGTLGFNSFNAQIHGDRISGTLFRVRSL) constitute a mitochondrion transit peptide. 77–84 (KGGVGKTS) is a binding site for ATP. Aspartate 106 is a catalytic residue. Asparagine 328 contributes to the ATP binding site.

This sequence belongs to the arsA ATPase family.

It localises to the mitochondrion matrix. It carries out the reaction ATP + H2O = ADP + phosphate + H(+). The sequence is that of ATPase GET3C from Arabidopsis thaliana (Mouse-ear cress).